A 158-amino-acid polypeptide reads, in one-letter code: Large ribosomal subunit protein uL11 (158 aa).

Positions 1–28 are disordered; sequence MAGTIEALVPGGQATPGPPLGPELGPTP.

This sequence belongs to the universal ribosomal protein uL11 family. In terms of assembly, part of the ribosomal stalk of the 50S ribosomal subunit. Interacts with L10 and the large rRNA to form the base of the stalk. L10 forms an elongated spine to which L12 dimers bind in a sequential fashion forming a multimeric L10(L12)X complex.

Forms part of the ribosomal stalk which helps the ribosome interact with GTP-bound translation factors. The sequence is that of Large ribosomal subunit protein uL11 from Halorubrum lacusprofundi (strain ATCC 49239 / DSM 5036 / JCM 8891 / ACAM 34).